We begin with the raw amino-acid sequence, 87 residues long: Small ribosomal subunit protein uS17 (87 aa).

It belongs to the universal ribosomal protein uS17 family. Part of the 30S ribosomal subunit.

In terms of biological role, one of the primary rRNA binding proteins, it binds specifically to the 5'-end of 16S ribosomal RNA. The chain is Small ribosomal subunit protein uS17 from Geobacillus thermodenitrificans (strain NG80-2).